The primary structure comprises 366 residues: Spermidine/putrescine import ATP-binding protein PotA (366 aa).

Residues 14-247 (ISARALRKVY…PADRFVADFI (234 aa)) form the ABC transporter domain. An ATP-binding site is contributed by 49-56 (GPSGCGKT).

Belongs to the ABC transporter superfamily. Spermidine/putrescine importer (TC 3.A.1.11.1) family. As to quaternary structure, the complex is composed of two ATP-binding proteins (PotA), two transmembrane proteins (PotB and PotC) and a solute-binding protein (PotD).

The protein localises to the cell inner membrane. The catalysed reaction is ATP + H2O + polyamine-[polyamine-binding protein]Side 1 = ADP + phosphate + polyamineSide 2 + [polyamine-binding protein]Side 1.. Part of the ABC transporter complex PotABCD involved in spermidine/putrescine import. Responsible for energy coupling to the transport system. This is Spermidine/putrescine import ATP-binding protein PotA from Ruegeria pomeroyi (strain ATCC 700808 / DSM 15171 / DSS-3) (Silicibacter pomeroyi).